Consider the following 441-residue polypeptide: Tol-Pal system protein TolB (441 aa).

Positions 1–39 (MPAMTPAFRRADLTGFLRTYGAALILLLAAMLAWQPAQA) are cleaved as a signal peptide.

Belongs to the TolB family. In terms of assembly, the Tol-Pal system is composed of five core proteins: the inner membrane proteins TolA, TolQ and TolR, the periplasmic protein TolB and the outer membrane protein Pal. They form a network linking the inner and outer membranes and the peptidoglycan layer.

It is found in the periplasm. In terms of biological role, part of the Tol-Pal system, which plays a role in outer membrane invagination during cell division and is important for maintaining outer membrane integrity. The sequence is that of Tol-Pal system protein TolB from Bordetella parapertussis (strain 12822 / ATCC BAA-587 / NCTC 13253).